Here is an 83-residue protein sequence, read N- to C-terminus: Greglin (83 aa).

A phosphoserine mark is found at Ser8, Ser11, and Ser15. Cystine bridges form between Cys21/Cys55, Cys25/Cys48, Cys33/Cys69, and Cys53/Cys76.

Its function is as follows. Serine protease inhibitor. Inhibits porcine pancreatic elastase with a Ki of 58.3 nM, human neutrophil elastase with a Ki of 3.6 nM, cathepsin G with a Ki of 153.5 nM, chymotrypsin with a Ki of 26.7 nM and subtilisin with a Ki of 0.68 nM. Does not inhibit neutrophil protease 3 or pancreatic trypsin. In Schistocerca gregaria (Desert locust), this protein is Greglin.